We begin with the raw amino-acid sequence, 107 residues long: Integration host factor subunit alpha (107 aa).

It belongs to the bacterial histone-like protein family. As to quaternary structure, heterodimer of an alpha and a beta chain.

Functionally, this protein is one of the two subunits of integration host factor, a specific DNA-binding protein that functions in genetic recombination as well as in transcriptional and translational control. This is Integration host factor subunit alpha from Brucella suis (strain ATCC 23445 / NCTC 10510).